We begin with the raw amino-acid sequence, 332 residues long: 2,3-diketo-L-gulonate reductase (332 aa).

Residue H44 is the Proton donor of the active site. NAD(+) is bound by residues 168 to 174 (ITMVDMS), 224 to 225 (WK), and 304 to 306 (GHE).

This sequence belongs to the LDH2/MDH2 oxidoreductase family. DlgD subfamily. In terms of assembly, homodimer.

The protein localises to the cytoplasm. It catalyses the reaction 3-dehydro-L-gulonate + NAD(+) = 2,3-dioxo-L-gulonate + NADH + H(+). The enzyme catalyses 3-dehydro-L-gulonate + NADP(+) = 2,3-dioxo-L-gulonate + NADPH + H(+). In terms of biological role, catalyzes the reduction of 2,3-diketo-L-gulonate in the presence of NADH, to form 3-keto-L-gulonate. This chain is 2,3-diketo-L-gulonate reductase, found in Salmonella typhimurium (strain LT2 / SGSC1412 / ATCC 700720).